The chain runs to 445 residues: MMLQCAPKKNERLRGSCDFCTQSKLRCNKNKPSCRRCTLQQQPCVYSVARRTGRPPKHPRKANDCQEANGQHGDQDPVTSTPGGSYQQQSNHLLDVEGDGANFTLADASTTAQGRETAASPALDNALLVGETFGFSSLLDDPLIQSDDFFSFSLCMPPGEKEGHMASPRTLNGSTGPCSPTVLSSIDVPHLPGRFGFLESSVESGLHGRTRPHLVEQPDKTVPSSFSEIEKIYDEGLTFSGLDSAINAVTNNGKGEPNISGTMAAHPHSKRQCFCSTSMSKLQMLVLHPTLCQKNSRARFDMALFLEEVVFSIYRDVLQCLVCQSKSLHSLASLCICTDWVIEALRDVAQDLSSGQDNLGGFRAGLYPPKDKFSICVGRFVLDDQLRESCTRSLVRYRLRKLIPIMDTMMKLNHRGAGGALSQAIRTMVEDVHHKIESALGMMEL.

Positions 17–44 form a DNA-binding region, zn(2)-C6 fungal-type; that stretch reads CDFCTQSKLRCNKNKPSCRRCTLQQQPC. A disordered region spans residues 50–89; sequence RRTGRPPKHPRKANDCQEANGQHGDQDPVTSTPGGSYQQQ. Positions 51–60 are enriched in basic residues; it reads RTGRPPKHPR. Positions 77 to 89 are enriched in polar residues; sequence PVTSTPGGSYQQQ.

The protein localises to the nucleus. Transcription factor that regulates the expression of the gene clusters that mediate the biosynthesis of the host-selective toxins (HSTs) AF-toxins responsible for Alternaria black spot of strawberry disease by the strawberry pathotype. On cellular level, AF-toxins affect plasma membrane of susceptible cells and cause a sudden increase in loss of K(+) after a few minutes of toxin treatment. This Alternaria alternata (Alternaria rot fungus) protein is Transcription activator AFTR-1.